The following is an 81-amino-acid chain: X antigen family member 1 (81 aa).

Lys12 participates in a covalent cross-link: Glycyl lysine isopeptide (Lys-Gly) (interchain with G-Cter in SUMO2). Ser20 carries the phosphoserine modification. Residues Lys61 and Lys65 each participate in a glycyl lysine isopeptide (Lys-Gly) (interchain with G-Cter in SUMO2) cross-link.

It belongs to the GAGE family. In terms of tissue distribution, in normal tissues, highly expressed in testis. Expressed also in many different types of cancers: highly expressed in breast cancer, prostate cancer and many types of lung cancers, including squamous cell carcinoma, small cell carcinoma, non-small cell carcinoma, and adenocarcinoma, as well as in Ewing's cell lines, in some Ewing's sarcoma patient samples, and in one of one alveolar rhabdomyosarcoma patient sample.

This is X antigen family member 1 from Homo sapiens (Human).